The primary structure comprises 159 residues: Eukaryotic translation initiation factor 5A (159 aa).

Residues 1 to 12 show a composition bias toward basic and acidic residues; sequence MSDEEHQFESKA. The interval 1–23 is disordered; sequence MSDEEHQFESKADAGASKTYPQQ. Lysine 52 carries the hypusine modification.

This sequence belongs to the eIF-5A family. Lys-52 undergoes hypusination, a unique post-translational modification that consists in the addition of a butylamino group from spermidine to lysine side chain, leading to the formation of the unusual amino acid hypusine. eIF-5As are the only known proteins to undergo this modification, which is essential for their function.

In terms of biological role, translation factor that promotes translation elongation and termination, particularly upon ribosome stalling at specific amino acid sequence contexts. Binds between the exit (E) and peptidyl (P) site of the ribosome and promotes rescue of stalled ribosome: specifically required for efficient translation of polyproline-containing peptides as well as other motifs that stall the ribosome. Acts as a ribosome quality control (RQC) cofactor by joining the RQC complex to facilitate peptidyl transfer during CAT tailing step. This Senecio vernalis (Spring groundsel) protein is Eukaryotic translation initiation factor 5A (EIFSV1).